The following is a 236-amino-acid chain: Probable calcium-binding protein CML30 (236 aa).

The tract at residues Val-43 to Leu-64 is disordered. Positions Lys-49–Pro-60 are enriched in basic and acidic residues. EF-hand domains lie at Asp-59–Ala-94 and Ser-96–Arg-131. Residues Asp-72, Asp-74, Asp-76, Glu-83, Asp-109, Asn-111, Asp-113, and Glu-120 each contribute to the Ca(2+) site. Positions Lys-130–Glu-158 are disordered. Residues Ala-146–Glu-158 are compositionally biased toward acidic residues. EF-hand domains follow at residues Glu-161–Arg-196 and Pro-202–Ala-236. Ca(2+) is bound by residues Asp-174, Asn-176, Asp-178, Glu-185, Asp-215, Asp-217, Asp-219, Met-221, and Glu-226.

Its function is as follows. Potential calcium sensor. The chain is Probable calcium-binding protein CML30 (CML30) from Oryza sativa subsp. japonica (Rice).